We begin with the raw amino-acid sequence, 565 residues long: NAD-dependent malic enzyme (565 aa).

Residue Y103 is the Proton donor of the active site. K177 acts as the Proton acceptor in catalysis. A divalent metal cation-binding residues include E248, D249, and D272. Residues D272 and N419 each coordinate NAD(+). A Phosphoserine modification is found at S445.

It belongs to the malic enzymes family. Requires Mg(2+) as cofactor. Mn(2+) serves as cofactor.

It catalyses the reaction (S)-malate + NAD(+) = pyruvate + CO2 + NADH. The catalysed reaction is oxaloacetate + H(+) = pyruvate + CO2. In Schizosaccharomyces pombe (strain 972 / ATCC 24843) (Fission yeast), this protein is NAD-dependent malic enzyme (mae2).